The chain runs to 406 residues: uncharacterized protein (406 aa).

This is an uncharacterized protein from Acanthamoeba polyphaga mimivirus (APMV).